A 121-amino-acid polypeptide reads, in one-letter code: Non-specific lipid-transfer protein 3 (121 aa).

Residues 1–28 form the signal peptide; that stretch reads MAGARRTMALVALVAVVAAAVVAERASA. 4 cysteine pairs are disulfide-bonded: C32–C80, C42–C57, C58–C103, and C78–C117.

The protein belongs to the plant LTP family.

In terms of biological role, plant non-specific lipid-transfer proteins transfer phospholipids as well as galactolipids across membranes. May play a role in wax or cutin deposition in the cell walls of expanding epidermal cells and certain secretory tissues. May possess an antifungal activity and protect the plant against pathogens. This is Non-specific lipid-transfer protein 3 (LTP110-A) from Oryza sativa subsp. indica (Rice).